We begin with the raw amino-acid sequence, 1148 residues long: Putative transcription factor SEF1 (1148 aa).

Residues 1–51 (MVKDNRDSDQDQDFSSAHMKRQPEQQQLQQHQFPSKKQRISHHDDSHQINH) form a disordered region. A Phosphoserine modification is found at S8. A DNA-binding region (zn(2)-C6 fungal-type) is located at residues 57 to 87 (CTHCRQHKIKCDASQNFPHPCSRCEKIGLHC). The segment at 148–180 (PTPGTIIPNPDSSPSSGSPTSSAAQRDSKVSVQ) is disordered. Over residues 150–169 (PGTIIPNPDSSPSSGSPTSS) the composition is skewed to low complexity. Residue S263 is modified to Phosphoserine. The tract at residues 524–550 (EESEEDNNDSIDNNNNDKRNKKDEPHV) is disordered. A compositionally biased stretch (basic and acidic residues) spans 538-550 (NNDKRNKKDEPHV). S806 is subject to Phosphoserine. Positions 1029–1050 (RSQSSMSHSRTPIASKSNNMTD) are enriched in polar residues. Residues 1029-1063 (RSQSSMSHSRTPIASKSNNMTDLHSVVSDPGSSKS) are disordered.

The protein localises to the nucleus. Functionally, putative transcription factor that seems to be involved in the sporulation process. Suppresses the lethal phenotype of RPM2 deletion. This Saccharomyces cerevisiae (strain ATCC 204508 / S288c) (Baker's yeast) protein is Putative transcription factor SEF1 (SEF1).